The sequence spans 280 residues: Large ribosomal subunit protein uL2 (280 aa).

Disordered regions lie at residues 1–58 (MAIR…GGGH) and 226–280 (MNPV…KHGR). Composition is skewed to basic residues over residues 37–58 (LHGH…GGGH) and 268–280 (IVRR…KHGR).

Belongs to the universal ribosomal protein uL2 family. Part of the 50S ribosomal subunit. Forms a bridge to the 30S subunit in the 70S ribosome.

Its function is as follows. One of the primary rRNA binding proteins. Required for association of the 30S and 50S subunits to form the 70S ribosome, for tRNA binding and peptide bond formation. It has been suggested to have peptidyltransferase activity; this is somewhat controversial. Makes several contacts with the 16S rRNA in the 70S ribosome. In Mycolicibacterium paratuberculosis (strain ATCC BAA-968 / K-10) (Mycobacterium paratuberculosis), this protein is Large ribosomal subunit protein uL2.